The primary structure comprises 644 residues: Threonine--tRNA ligase (644 aa).

In terms of domain architecture, TGS spans 1-62; that stretch reads MSFSITLPDG…DSDSEVAIIT (62 aa). A catalytic region spans residues 240–538; it reads DHRTIGRDLD…LTEIYKGAFP (299 aa). The Zn(2+) site is built by Cys-334, His-385, and His-515.

Belongs to the class-II aminoacyl-tRNA synthetase family. As to quaternary structure, homodimer. Zn(2+) is required as a cofactor.

The protein resides in the cytoplasm. The catalysed reaction is tRNA(Thr) + L-threonine + ATP = L-threonyl-tRNA(Thr) + AMP + diphosphate + H(+). Its function is as follows. Catalyzes the attachment of threonine to tRNA(Thr) in a two-step reaction: L-threonine is first activated by ATP to form Thr-AMP and then transferred to the acceptor end of tRNA(Thr). Also edits incorrectly charged L-seryl-tRNA(Thr). The polypeptide is Threonine--tRNA ligase (Lactobacillus helveticus (strain DPC 4571)).